Reading from the N-terminus, the 269-residue chain is MAWVPAESAVEELMPRLLPVEPCDLTEGFDPSVPPRTPQEYLRRVQIEAAQCPDVVVAQIDPKKLKRKQSVNISLSGCQPAPEGYSPTLQWQQQQVAHFSTVRQSVHKHRNHWKSQQLDSNVAMPKSEDEEGWKKFCLGERLCAEGATGPSTEESPGIDYVQVGFPPLLSIVSRMNQTTITSVLEYLSNWFGERDFTPELGRWFYALLACLEKPLLPEAHSLIRQLARRCSEVRLLVGSKDDERVPALNLLICLVSRYFDQRDLADEPS.

Ser70 and Ser155 each carry phosphoserine.

The protein belongs to the gemin-2 family. Monomer. Part of the core SMN complex that contains SMN1, GEMIN2/SIP1, DDX20/GEMIN3, GEMIN4, GEMIN5, GEMIN6, GEMIN7, GEMIN8 and STRAP/UNRIP. Part of the SMN-Sm complex that contains SMN1, GEMIN2/SIP1, DDX20/GEMIN3, GEMIN4, GEMIN5, GEMIN6, GEMIN7, GEMIN8, STRAP/UNRIP and the Sm proteins SNRPB, SNRPD1, SNRPD2, SNRPD3, SNRPE, SNRPF and SNRPG. Interacts with GEMIN5; the interaction is direct. Interacts (via C-terminus) with SMN1; the interaction is direct. Interacts with SNRPD1; the interaction is direct. Interacts with SNRPD2; the interaction is direct. Interacts (via N-terminus) with SNRPF; the interaction is direct. Interacts (via N-terminus) with SNRPE; the interaction is direct. Interacts (via N-terminus) with SNRPG; the interaction is direct.

It localises to the nucleus. The protein resides in the gem. It is found in the cytoplasm. Its function is as follows. The SMN complex catalyzes the assembly of small nuclear ribonucleoproteins (snRNPs), the building blocks of the spliceosome, and thereby plays an important role in the splicing of cellular pre-mRNAs. Most spliceosomal snRNPs contain a common set of Sm proteins SNRPB, SNRPD1, SNRPD2, SNRPD3, SNRPE, SNRPF and SNRPG that assemble in a heptameric protein ring on the Sm site of the small nuclear RNA to form the core snRNP (Sm core). In the cytosol, the Sm proteins SNRPD1, SNRPD2, SNRPE, SNRPF and SNRPG (5Sm) are trapped in an inactive 6S pICln-Sm complex by the chaperone CLNS1A that controls the assembly of the core snRNP. To assemble core snRNPs, the SMN complex accepts the trapped 5Sm proteins from CLNS1A. Binding of snRNA inside 5Sm ultimately triggers eviction of the SMN complex, thereby allowing binding of SNRPD3 and SNRPB to complete assembly of the core snRNP. Within the SMN complex, GEMIN2 constrains the conformation of 5Sm, thereby promoting 5Sm binding to snRNA containing the snRNP code (a nonameric Sm site and a 3'-adjacent stem-loop), thus preventing progression of assembly until a cognate substrate is bound. This Mus musculus (Mouse) protein is Gem-associated protein 2.